Here is a 186-residue protein sequence, read N- to C-terminus: MDPNNQIQAPVENYANPRTCLFHVLFKGAALAFYILSALFFNSFVIIFVVTVLLAALDFWVVKNVSGRILVGLRWWNEINDLGESVWKFESLDQESLARMNKKDSWLFWWTLYLAAAAWFILGVFSLIRFQADYLLVVGVCLSLNVANIIGFTKCKKDAKKQFQQFASQTIASRFQSTVQSAFTLV.

M1 bears the N-acetylmethionine mark. Transmembrane regions (helical) follow at residues 35–55 (ILSALFFNSFVIIFVVTVLLA), 108–128 (FWWTLYLAAAAWFILGVFSLI), and 132–152 (ADYLLVVGVCLSLNVANIIGF).

This sequence belongs to the TVP23 family. In terms of assembly, component of a trans-Golgi network (TGN)-localized ECH/YIP4 complex made of ECH, YIP4A and YIP4B. Interacts directly with YIP4A and YIP4B.

It localises to the golgi apparatus. The protein localises to the trans-Golgi network membrane. It is found in the early endosome membrane. In terms of biological role, mediates trans-Golgi-network trafficking and cell elongation. Required for keeping the appropriate balance between secretory trafficking and vacuolar targeting of a subset of proteins. The ECH/YIP4 complex is involved in the modulation of the trans-Golgi network (TGN)-mediated trafficking of some proteins and cell wall components (e.g. pectin and hemicellulose) to the cell wall in dark-grown hypocotyls and in secretory cells of the seed coat. In Arabidopsis thaliana (Mouse-ear cress), this protein is Golgi apparatus membrane protein-like protein ECHIDNA.